Reading from the N-terminus, the 578-residue chain is SUMOylated effector protein AmpA (578 aa).

The interval 144–169 (PQTVDPSVVESATGSGVDTQEEQEID) is disordered. 3 consecutive repeat copies span residues 180 to 272 (TEEQ…SVEA), 304 to 425 (KEET…VSVE), and 428 to 557 (TEEP…MQQE). Residues 180–557 (TEEQEVILEE…VEADAGMQQE (378 aa)) form a 3 X approximate tandem repeats region. Positions 516-578 (VSVEADAGMQ…DPDDEDVLSY (63 aa)) are disordered.

Post-translationally, polysumoylated during infection on at least two lysine residues, in the N- and C-terminal section. SUMO2/3 modification of AmpA throughout the infection cycle is likely critical for bacterial intracellular survival, while terminal SUMO1 conjugation of AmpA may promote a late-stage infection cycle event. Only a small portion of the available AmpA pool is actually SUMOylated at any given time.

Its subcellular location is the secreted. The protein resides in the host membrane. It localises to the host cytoplasm. The protein localises to the host cytosol. Functionally, secreted effector that hijacks host cell SUMOylation during A.phagocytophilum infection and is important for the pathogen's intracellular survival. The chain is SUMOylated effector protein AmpA from Anaplasma phagocytophilum (strain HZ).